The sequence spans 495 residues: E3 ubiquitin-protein ligase RAD18 (495 aa).

The residue at position 1 (Met1) is an N-acetylmethionine. The segment at 25–64 (CGICFEYFNIAMIIPQCSHNYCSLCIRKFLSYKTQCPTCC) adopts an RING-type zinc-finger fold. A phosphoserine mark is found at Ser99 and Ser103. At Thr118 the chain carries Phosphothreonine. Phosphoserine occurs at positions 122, 125, 142, 158, and 164. Residues 152–197 (ENKSKFSPQKEASPAAKTKETRSVEEIAPDPSEAKRPEPPSTSTLK) are disordered. The UBZ4-type zinc finger occupies 201-228 (KVDCPVCGVNIPESHINKHLDSCLSREE). Residues Cys204, Cys207, His219, and Cys223 each coordinate Zn(2+). The LR motif motif lies at 232-240 (SLRSSVHKR). The SAP domain maps to 248–282 (YNLLSDRDLKKKLKEHGLSIQGNKQQLIKRHQEFV). Ser322 bears the Phosphoserine mark. Lys376 is covalently cross-linked (Glycyl lysine isopeptide (Lys-Gly) (interchain with G-Cter in SUMO2)). 2 disordered regions span residues 400-423 (NHFS…DSSS) and 456-495 (AWEA…RNRN). The span at 410 to 421 (PEELEPDREEDS) shows a compositional bias: acidic residues. Residues Ser471 and Ser483 each carry the phosphoserine modification. Residues 479 to 495 (RAAESAEIEPRNKRNRN) show a composition bias toward basic and acidic residues.

It belongs to the RAD18 family. As to quaternary structure, homodimer. Interacts with UBE2A and UBE2B, one homodimer binding one molecule of UBE2B. Interacts with SHPRH. Interacts with HLTF. Interacts with SPRTN; leading to enhance chromatin association of RAD18 and RAD18-mediated PCNA ubiquitination and translesion DNA synthesis. Interacts (via C-terminus and phosphorylated form) with SLF1 (via BRCT domains); this interaction is required for efficient repair of UV-induced DNA damage. Interacts with SLF2. Interacts with SMC5; this interaction is increased in a SLF1 or SLF2-dependent manner. Interacts with DNA damage up-regulated protein DDUP. Forms a complex with DDUP and H2AX following DDUP phosphorylation.

It localises to the nucleus. The protein resides in the cytoplasm. The protein localises to the cytoskeleton. It is found in the microtubule organizing center. Its subcellular location is the centrosome. It catalyses the reaction S-ubiquitinyl-[E2 ubiquitin-conjugating enzyme]-L-cysteine + [acceptor protein]-L-lysine = [E2 ubiquitin-conjugating enzyme]-L-cysteine + N(6)-ubiquitinyl-[acceptor protein]-L-lysine.. Its pathway is protein modification; protein ubiquitination. Functionally, E3 ubiquitin-protein ligase involved in postreplication repair of UV-damaged DNA. Postreplication repair functions in gap-filling of a daughter strand on replication of damaged DNA. Associates to the E2 ubiquitin conjugating enzyme UBE2B to form the UBE2B-RAD18 ubiquitin ligase complex involved in mono-ubiquitination of DNA-associated PCNA on 'Lys-164'. Has ssDNA binding activity. This chain is E3 ubiquitin-protein ligase RAD18 (RAD18), found in Homo sapiens (Human).